We begin with the raw amino-acid sequence, 213 residues long: Putative thiamine-phosphate synthase (213 aa).

Residues 38–42 (QLREK) and Asn70 contribute to the 4-amino-2-methyl-5-(diphosphooxymethyl)pyrimidine site. Residue Asp71 coordinates Mg(2+). Ser109 contacts 4-amino-2-methyl-5-(diphosphooxymethyl)pyrimidine. Residue 135–137 (TPS) participates in 2-[(2R,5Z)-2-carboxy-4-methylthiazol-5(2H)-ylidene]ethyl phosphate binding. A 4-amino-2-methyl-5-(diphosphooxymethyl)pyrimidine-binding site is contributed by Lys138. Residues Gly166 and 186–187 (IS) each bind 2-[(2R,5Z)-2-carboxy-4-methylthiazol-5(2H)-ylidene]ethyl phosphate.

Belongs to the thiamine-phosphate synthase family. Mg(2+) is required as a cofactor.

The catalysed reaction is 2-[(2R,5Z)-2-carboxy-4-methylthiazol-5(2H)-ylidene]ethyl phosphate + 4-amino-2-methyl-5-(diphosphooxymethyl)pyrimidine + 2 H(+) = thiamine phosphate + CO2 + diphosphate. It catalyses the reaction 2-(2-carboxy-4-methylthiazol-5-yl)ethyl phosphate + 4-amino-2-methyl-5-(diphosphooxymethyl)pyrimidine + 2 H(+) = thiamine phosphate + CO2 + diphosphate. It carries out the reaction 4-methyl-5-(2-phosphooxyethyl)-thiazole + 4-amino-2-methyl-5-(diphosphooxymethyl)pyrimidine + H(+) = thiamine phosphate + diphosphate. Its pathway is cofactor biosynthesis; thiamine diphosphate biosynthesis; thiamine phosphate from 4-amino-2-methyl-5-diphosphomethylpyrimidine and 4-methyl-5-(2-phosphoethyl)-thiazole: step 1/1. Condenses 4-methyl-5-(beta-hydroxyethyl)thiazole monophosphate (THZ-P) and 2-methyl-4-amino-5-hydroxymethyl pyrimidine pyrophosphate (HMP-PP) to form thiamine monophosphate (TMP). The chain is Putative thiamine-phosphate synthase (thiE) from Geobacter sulfurreducens (strain ATCC 51573 / DSM 12127 / PCA).